The primary structure comprises 843 residues: Potassium transporter 10 (843 aa).

Positions 1-15 (MKSPSPVDPESPSSP) are enriched in low complexity. Positions 1–25 (MKSPSPVDPESPSSPDCKGGSSSKR) are disordered. The Cytoplasmic portion of the chain corresponds to 1-34 (MKSPSPVDPESPSSPDCKGGSSSKRRRLPWRMTM). A helical transmembrane segment spans residues 35–55 (SLAYQSLGVVYGDLSTSPLYV). At 56-72 (YKAAFAEDIQHSETNEE) the chain is on the vacuolar side. Residues 73 to 93 (ILGVLSFVFWTLTLVPLLKYV) traverse the membrane as a helical segment. The Cytoplasmic segment spans residues 94–183 (CVVLRADDNG…LLERHKVLQR (90 aa)). Residues 184-204 (VLLVLALVGTCMVIGDGVLTP) form a helical membrane-spanning segment. Topologically, residues 205 to 225 (AISVFSAVSGLELSMEKHQHK) are vacuolar. Residues 226–246 (YVEVPIACFVLVCLFCLQHYG) traverse the membrane as a helical segment. The Cytoplasmic portion of the chain corresponds to 247–249 (THR). Residues 250–270 (VGFLFAPIVITWLLCISMIGV) traverse the membrane as a helical segment. At 271-298 (YNIVHWEPNVYRALSPYYMYKFLKKTQR) the chain is on the vacuolar side. The chain crosses the membrane as a helical span at residues 299–319 (GGWMSLGGILLCITGSEAMFA). At 320–326 (DLGHFNQ) the chain is on the cytoplasmic side. A helical membrane pass occupies residues 327-347 (LSIQIAFTCMVYPSLILAYMG). Residues 348-377 (QAAYLCKHHIIESDYRIGFYVSVPEKIRWP) lie on the Vacuolar side of the membrane. Residues 378 to 398 (VLAIAILAAVVGSQAVITGTF) traverse the membrane as a helical segment. Over 399-425 (SMIKQCTALGCFPRVKIVHTSDKVHGQ) the chain is Cytoplasmic. A helical membrane pass occupies residues 426–446 (IYIPEINWILMILCLAITIGF). Residues 447–451 (RDTKH) are Vacuolar-facing. A helical transmembrane segment spans residues 452 to 472 (LGNASGLAVITVMLVTTCLMS). At 473–482 (LVIVLCWHKS) the chain is on the cytoplasmic side. Residues 483-505 (IFLAFGFIIFFGTIEALYFSASL) traverse the membrane as a helical segment. Over 506-510 (IKFRE) the chain is Vacuolar. Residues 511 to 531 (GAWVPIVLAFIFMAIMCIWHY) form a helical membrane-spanning segment. The Cytoplasmic portion of the chain corresponds to 532–843 (GTIKKYEFDL…TLEVGMIYYV (312 aa)). A disordered region spans residues 667–747 (AASSKPKNVC…IMSPSPSPPP (81 aa)). Over residues 718-735 (GGSGSGSGRGSSRGGGGA) the composition is skewed to gly residues.

This sequence belongs to the HAK/KUP transporter (TC 2.A.72.3) family. Expressed in roots, shoots, and panicle at flowering stage.

Its subcellular location is the vacuole membrane. High-affinity potassium transporter. This is Potassium transporter 10 (HAK10) from Oryza sativa subsp. japonica (Rice).